The primary structure comprises 397 residues: Acetyl-CoA acetyltransferase, cytosolic (397 aa).

Methionine 1 carries the post-translational modification N-acetylmethionine. The active-site Acyl-thioester intermediate is cysteine 92. The residue at position 200 (lysine 200) is an N6-acetyllysine. Residues arginine 223 and serine 226 each contribute to the CoA site. N6-acetyllysine occurs at positions 233 and 235. Serine 252 contributes to the CoA binding site. Cysteine 383 functions as the Proton donor/acceptor in the catalytic mechanism.

The protein belongs to the thiolase-like superfamily. Thiolase family. In terms of assembly, homotetramer.

The protein resides in the cytoplasm. It is found in the cytosol. It catalyses the reaction 2 acetyl-CoA = acetoacetyl-CoA + CoA. It functions in the pathway lipid metabolism; fatty acid metabolism. Its function is as follows. Involved in the biosynthetic pathway of cholesterol. This chain is Acetyl-CoA acetyltransferase, cytosolic (Acat2), found in Mus musculus (Mouse).